We begin with the raw amino-acid sequence, 311 residues long: Aspartate carbamoyltransferase catalytic subunit (311 aa).

Carbamoyl phosphate-binding residues include Arg55 and Thr56. Lys83 serves as a coordination point for L-aspartate. Carbamoyl phosphate is bound by residues Arg105, His134, and Gln137. L-aspartate-binding residues include Arg167 and Arg226. 2 residues coordinate carbamoyl phosphate: Gly267 and Pro268.

It belongs to the aspartate/ornithine carbamoyltransferase superfamily. ATCase family. Heterododecamer (2C3:3R2) of six catalytic PyrB chains organized as two trimers (C3), and six regulatory PyrI chains organized as three dimers (R2).

The enzyme catalyses carbamoyl phosphate + L-aspartate = N-carbamoyl-L-aspartate + phosphate + H(+). Its pathway is pyrimidine metabolism; UMP biosynthesis via de novo pathway; (S)-dihydroorotate from bicarbonate: step 2/3. Its function is as follows. Catalyzes the condensation of carbamoyl phosphate and aspartate to form carbamoyl aspartate and inorganic phosphate, the committed step in the de novo pyrimidine nucleotide biosynthesis pathway. This Corynebacterium jeikeium (strain K411) protein is Aspartate carbamoyltransferase catalytic subunit.